We begin with the raw amino-acid sequence, 620 residues long: Chaperone protein HscA homolog (620 aa).

This sequence belongs to the heat shock protein 70 family.

In terms of biological role, chaperone involved in the maturation of iron-sulfur cluster-containing proteins. Has a low intrinsic ATPase activity which is markedly stimulated by HscB. In Pseudomonas fluorescens (strain ATCC BAA-477 / NRRL B-23932 / Pf-5), this protein is Chaperone protein HscA homolog.